A 98-amino-acid polypeptide reads, in one-letter code: Integration host factor subunit alpha (98 aa).

Positions 50-71 (GNFDLRDKNQRPGRNPKTGEDI) are disordered.

Belongs to the bacterial histone-like protein family. Heterodimer of an alpha and a beta chain.

Functionally, this protein is one of the two subunits of integration host factor, a specific DNA-binding protein that functions in genetic recombination as well as in transcriptional and translational control. This Proteus mirabilis (strain HI4320) protein is Integration host factor subunit alpha.